The primary structure comprises 248 residues: 2,3-bisphosphoglycerate-dependent phosphoglycerate mutase (248 aa).

Substrate is bound by residues 10–17 (RHGQSEWN), 23–24 (TG), Arg62, 89–92 (ERHY), Lys100, 116–117 (RR), and 183–184 (GN). Catalysis depends on His11, which acts as the Tele-phosphohistidine intermediate. Residue Glu89 is the Proton donor/acceptor of the active site.

The protein belongs to the phosphoglycerate mutase family. BPG-dependent PGAM subfamily.

It carries out the reaction (2R)-2-phosphoglycerate = (2R)-3-phosphoglycerate. Its pathway is carbohydrate degradation; glycolysis; pyruvate from D-glyceraldehyde 3-phosphate: step 3/5. Catalyzes the interconversion of 2-phosphoglycerate and 3-phosphoglycerate. The polypeptide is 2,3-bisphosphoglycerate-dependent phosphoglycerate mutase (Corynebacterium glutamicum (strain ATCC 13032 / DSM 20300 / JCM 1318 / BCRC 11384 / CCUG 27702 / LMG 3730 / NBRC 12168 / NCIMB 10025 / NRRL B-2784 / 534)).